The primary structure comprises 258 residues: MIPPADSLLKYDTPVLVSRNTEKRSPKARLLKVSPQQPGPSGSAPQLPKTKLPSAPCVPDPTKQAEEILNAILPPREWVEDTQLWIQQVSSTPSTRMDVVHLQEQLDLKLQQRQARETGICPVRRELYSQCFDELIREVTINCAERGLLLLRVRDEIRMTIAAYQTLYESSVAFGMRKALQAEQGKSDMERKIAELETEKRDLERQVNEQKAKCEATEKRESERRQVEEKKHNEEIQFLKRTNQQLKAQLEGIIAPKK.

2 disordered regions span residues Arg-19–Asp-60 and Val-207–Lys-231. Low complexity predominate over residues Ser-34–Pro-48. Residues Met-176 to Ala-255 adopt a coiled-coil conformation.

The protein belongs to the inner dynein arm light chain family. Interacts with CFAP45. Interacts with DYNC1H1.

Its subcellular location is the cell projection. It is found in the cilium. The protein localises to the flagellum. The protein resides in the dynein axonemal particle. It localises to the cytoplasm. Functionally, involved in sperm flagellum assembly. In Macaca fascicularis (Crab-eating macaque), this protein is Axonemal dynein light intermediate polypeptide 1 (DNALI1).